The following is an 80-amino-acid chain: Small ribosomal subunit protein bS18 (80 aa).

It belongs to the bacterial ribosomal protein bS18 family. Part of the 30S ribosomal subunit. Forms a tight heterodimer with protein bS6.

Its function is as follows. Binds as a heterodimer with protein bS6 to the central domain of the 16S rRNA, where it helps stabilize the platform of the 30S subunit. In Acholeplasma laidlawii (strain PG-8A), this protein is Small ribosomal subunit protein bS18.